A 142-amino-acid chain; its full sequence is HTH-type transcriptional repressor NsrR (142 aa).

The 128-residue stretch at 2–129 folds into the HTH rrf2-type domain; it reads QLTSFTDYGL…DRHTLAELVE (128 aa). Positions 28–51 form a DNA-binding region, H-T-H motif; sequence ITEVTQVYGVSRNHMVKIINQLSH. [2Fe-2S] cluster contacts are provided by Cys-91, Cys-96, and Cys-102.

It depends on [2Fe-2S] cluster as a cofactor.

Its function is as follows. Nitric oxide-sensitive repressor of genes involved in protecting the cell against nitrosative stress. May require iron for activity. In Proteus mirabilis (strain HI4320), this protein is HTH-type transcriptional repressor NsrR.